A 100-amino-acid chain; its full sequence is Small ribosomal subunit protein uS14c (100 aa).

It belongs to the universal ribosomal protein uS14 family. Part of the 30S ribosomal subunit.

It is found in the plastid. The protein localises to the chloroplast. Its function is as follows. Binds 16S rRNA, required for the assembly of 30S particles. The protein is Small ribosomal subunit protein uS14c of Lactuca sativa (Garden lettuce).